Here is a 523-residue protein sequence, read N- to C-terminus: Cytoplasmic dynein 1 light intermediate chain 1 (523 aa).

Residues 1-25 (MAAVGRVGSFGSSPPGLASTYASGP) are disordered. ATP is bound at residue 74–81 (GEDGAGKT). Disordered regions lie at residues 200–219 (PGED…QEDR), 387–434 (PPTA…DPNM), and 457–523 (GSPG…GEAS). S207 carries the phosphoserine modification. T213 carries the phosphothreonine modification. Residues S398 and S405 each carry the phosphoserine modification. Phosphothreonine is present on T408. 4 positions are modified to phosphoserine: S412, S419, S421, and S427. The span at 412–421 (SVSSNVASVS) shows a compositional bias: low complexity. Residues 458–473 (SPGGPGVGGSPGGGAA) show a composition bias toward gly residues. A compositionally biased stretch (low complexity) spans 474–485 (GASPSLPPSAKK). S486 and S510 each carry phosphoserine. Residues 506–523 (PASVSPTTPTSPTEGEAS) show a composition bias toward low complexity. Phosphothreonine occurs at positions 512, 513, and 515. S516 bears the Phosphoserine mark.

The protein belongs to the dynein light intermediate chain family. In terms of assembly, homodimer. The cytoplasmic dynein 1 complex consists of two catalytic heavy chains (HCs) and a number of non-catalytic subunits presented by intermediate chains (ICs), light intermediate chains (LICs) and light chains (LCs); the composition seems to vary in respect to the IC, LIC and LC composition. The heavy chain homodimer serves as a scaffold for the probable homodimeric assembly of the respective non-catalytic subunits. The ICs and LICs bind directly to the HC dimer and the LCs assemble on the IC dimer. Self-associates. Interacts with DYNC1H1; DYNC1LI1 and DYNC1LI2 bind mutually exclusive to DYNC1H1. Interacts with PCNT. Forms a complex with RAB11FIP3 and RAB11A1; the interaction between DYNC1LI1 and RAB11FIP3 is direct and induces DYNC1LI1 localization onto endosomal membrane; the complex regulates endocytic trafficking. Interacts with RUFY3. In terms of processing, phosphorylated during mitosis but not in interphase.

The protein resides in the cytoplasm. The protein localises to the chromosome. It localises to the centromere. Its subcellular location is the kinetochore. It is found in the cytoskeleton. The protein resides in the spindle pole. The protein localises to the recycling endosome membrane. Its function is as follows. Acts as one of several non-catalytic accessory components of the cytoplasmic dynein 1 complex that are thought to be involved in linking dynein to cargos and to adapter proteins that regulate dynein function. Cytoplasmic dynein 1 acts as a motor for the intracellular retrograde motility of vesicles and organelles along microtubules. May play a role in binding dynein to membranous organelles or chromosomes. Probably involved in the microtubule-dependent transport of pericentrin. Is required for progress through the spindle assembly checkpoint. The phosphorylated form appears to be involved in the selective removal of MAD1L1 and MAD1L2 but not BUB1B from kinetochores. Forms a functional Rab11/RAB11FIP3/dynein complex onto endosomal membrane that regulates the movement of peripheral sorting endosomes (SE) along microtubule tracks toward the microtubule organizing center/centrosome, generating the endosomal recycling compartment (ERC). The chain is Cytoplasmic dynein 1 light intermediate chain 1 (Dync1li1) from Mus musculus (Mouse).